The following is a 581-amino-acid chain: mRNA-decapping enzyme 1B (581 aa).

A Phosphoserine modification is found at serine 145. Disordered stretches follow at residues 181–222 (QISS…PEPQ) and 236–258 (APCQ…PEKF). Residues 204-219 (GSRQQRGPRPGQTSDP) show a composition bias toward polar residues. Low complexity predominate over residues 244–255 (PPQTLPLQQQQP). A phosphoserine mark is found at serine 269 and serine 326. The segment at 349–411 (AENRCEPGAP…HQPVTGPGEV (63 aa)) is disordered. Residues 355 to 367 (PGAPAPASSATTP) are compositionally biased toward low complexity. Threonine 366 bears the Phosphothreonine mark. The segment covering 368-381 (VSLAQPTRLSSALP) has biased composition (polar residues). The span at 382-401 (PQTPGPRALPRPAPPGPGPG) shows a compositional bias: pro residues. Serine 412 is modified (phosphoserine). Positions 427-468 (QQLPAPGRPALAAKFPTATLSTRARNPLEPWRDPPPSTEQPA) are disordered. Residue serine 475 is modified to Phosphoserine. A disordered region spans residues 498–522 (SWAPPQERSRAPLPPGNQDPAATPT).

This sequence belongs to the DCP1 family. As to quaternary structure, interacts with DCP1A.

It localises to the cytoplasm. The protein localises to the nucleus. The enzyme catalyses a 5'-end (N(7)-methyl 5'-triphosphoguanosine)-ribonucleoside in mRNA + H2O = N(7)-methyl-GDP + a 5'-end phospho-ribonucleoside in mRNA + 2 H(+). Functionally, may play a role in the degradation of mRNAs, both in normal mRNA turnover and in nonsense-mediated mRNA decay. May remove the 7-methyl guanine cap structure from mRNA molecules, yielding a 5'-phosphorylated mRNA fragment and 7m-GDP. This Bos taurus (Bovine) protein is mRNA-decapping enzyme 1B (DCP1B).